A 526-amino-acid chain; its full sequence is Germ cell-less protein-like 2 (526 aa).

The tract at residues 1 to 85 (MGSSSSRVLG…DKQQPLLNTP (85 aa)) is disordered. A Nuclear localization signal motif is present at residues 49 to 55 (SHKRKRS). Basic and acidic residues predominate over residues 62–77 (CDPDSHREEHEEEGDK). Residues 85 to 91 (PARKKLR) carry the Nuclear localization signal motif. Positions 108 to 178 (SDIKICALGE…LYRDDVLIKP (71 aa)) constitute a BTB domain.

Interacts with CUL3. As to expression, expressed predominantly in testis.

Its subcellular location is the nucleus matrix. It functions in the pathway protein modification; protein ubiquitination. Possible function in spermatogenesis. Probable substrate-specific adapter of an E3 ubiquitin-protein ligase complex which mediates the ubiquitination and subsequent proteasomal degradation of target proteins. This chain is Germ cell-less protein-like 2, found in Homo sapiens (Human).